A 381-amino-acid chain; its full sequence is MAESHLLQWLLLLLPTLCGPGTAAWTTSSLACAQGPEFWCQSLEQALQCRALGHCLQEVWGHVGADDLCQECEDIVHILNKMAKEAIFQDTMRKFLEQECNVLPLKLLMPQCNQVLDDYFPLVIDYFQNQTDSNGICMHLGLCKSRQPEPEQEPGMSDPLPKPLRDPLPDPLLDKLVLPVLPGALQARPGPHTQDLSEQQFPIPLPYCWLCRALIKRIQAMIPKGALAVAVAQVCRVVPLVAGGICQCLAERYSVILLDTLLGRMLPQLVCRLVLRCSMDDSAGPRSPTGEWLPRDSECHLCMSVTTQAGNSSEQAIPQAMLQACVGSWLDREKCKQFVEQHTPQLLTLVPRGWDAHTTCQALGVCGTMSSPLQCIHSPDL.

Positions 1–24 (MAESHLLQWLLLLLPTLCGPGTAA) are cleaved as a signal peptide. The Saposin A-type domain maps to 25 to 65 (WTTSSLACAQGPEFWCQSLEQALQCRALGHCLQEVWGHVGA). Residues 25 to 200 (WTTSSLACAQ…PHTQDLSEQQ (176 aa)) constitute a propeptide that is removed on maturation. Saposin B-type domains follow at residues 65-147 (ADDL…KSRQ), 204-281 (PLPY…SMDD), and 295-370 (RDSE…GTMS). Disulfide bonds link Cys69/Cys143, Cys72/Cys137, Cys100/Cys112, Cys208/Cys277, Cys211/Cys271, Cys235/Cys246, Cys299/Cys366, Cys302/Cys360, and Cys325/Cys335. Residue Asn129 is glycosylated (N-linked (GlcNAc...) asparagine). Residues 280–381 (DDSAGPRSPT…PLQCIHSPDL (102 aa)) constitute a propeptide that is removed on maturation. The N-linked (GlcNAc...) asparagine glycan is linked to Asn311.

In terms of assembly, homodimer; disulfide-linked.

The protein localises to the secreted. Its subcellular location is the extracellular space. It localises to the surface film. Its function is as follows. Pulmonary surfactant-associated proteins promote alveolar stability by lowering the surface tension at the air-liquid interface in the peripheral air spaces. SP-B increases the collapse pressure of palmitic acid to nearly 70 millinewtons per meter. The chain is Pulmonary surfactant-associated protein B (SFTPB) from Homo sapiens (Human).